Reading from the N-terminus, the 621-residue chain is Kelch-like protein 40 (621 aa).

A BTB domain is found at 33-98 (LDCVVRVGER…LYTSEIALDE (66 aa)). The BACK domain occupies 133–239 (CLAVFRLGLL…PRAFLETRVE (107 aa)). Residues 265-298 (LTTLRKKKKEKGEQTARAKEANQGTEDTKAEDDE) form a disordered region. Positions 274–284 (EKGEQTARAKE) are enriched in basic and acidic residues. Kelch repeat units lie at residues 360–412 (QVFV…EALN), 413–462 (AIYV…SHMD), 463–510 (LVYV…VHDG), 512–557 (IFVA…SLAG), and 559–613 (LYAL…PVRL).

The protein belongs to the KLHL40 family. In terms of assembly, component of the BCR(KLHL40) E3 ubiquitin ligase complex, at least composed of CUL3, KLHL40 and RBX1. Interacts with LMOD3. Specifically expressed in skeletal muscles in embryonic, neonatal and adults. Expressed in various types of muscles, including extensor digitorum longus, gastrocnemius, soleus, diaphragm, masseter and heart (at protein level). Not detected in brain, liver and lung (at protein level).

The protein resides in the cytoplasm. Its subcellular location is the myofibril. The protein localises to the sarcomere. It is found in the a band. It localises to the i band. Substrate-specific adapter of a BCR (BTB-CUL3-RBX1) E3 ubiquitin ligase complex that acts as a key regulator of skeletal muscle development. The BCR(KLHL40) complex acts by mediating ubiquitination and degradation of TFDP1, thereby regulating the activity of the E2F:DP transcription factor complex. Promotes stabilization of LMOD3 by acting as a negative regulator of LMOD3 ubiquitination; the molecular process by which it negatively regulates ubiquitination of LMOD3 is however unclear. The protein is Kelch-like protein 40 of Mus musculus (Mouse).